The following is a 190-amino-acid chain: ATP synthase subunit delta (190 aa).

Belongs to the ATPase delta chain family. In terms of assembly, F-type ATPases have 2 components, F(1) - the catalytic core - and F(0) - the membrane proton channel. F(1) has five subunits: alpha(3), beta(3), gamma(1), delta(1), epsilon(1). F(0) has three main subunits: a(1), b(2) and c(10-14). The alpha and beta chains form an alternating ring which encloses part of the gamma chain. F(1) is attached to F(0) by a central stalk formed by the gamma and epsilon chains, while a peripheral stalk is formed by the delta and b chains.

The protein resides in the cell inner membrane. Functionally, f(1)F(0) ATP synthase produces ATP from ADP in the presence of a proton or sodium gradient. F-type ATPases consist of two structural domains, F(1) containing the extramembraneous catalytic core and F(0) containing the membrane proton channel, linked together by a central stalk and a peripheral stalk. During catalysis, ATP synthesis in the catalytic domain of F(1) is coupled via a rotary mechanism of the central stalk subunits to proton translocation. Its function is as follows. This protein is part of the stalk that links CF(0) to CF(1). It either transmits conformational changes from CF(0) to CF(1) or is implicated in proton conduction. This chain is ATP synthase subunit delta, found in Methylobacterium sp. (strain 4-46).